A 510-amino-acid chain; its full sequence is MGVLKFKHIFFRSFVKSSGVSQIVFTFLLIPCCLTLNFRAPPIIPNVPFLWAWNAPSEFCLGKFNEPLDMSLFTLMGSPRINVTGQGVTIFYVDRLGYYPYIDLTTGVTVHGGIPQKVSLQDHLDKSKQDILFYMPVDNLGMAVIDWEEWRPTWARNWKPKDVYKNRSIELVQQQNVQLSLPQATDKAKQEFEKAGKDFMLETIKLGRSLRPNHLWGYYLFPDCYNHHYRKPGYNGSCFDVEIKRNDDLSWLWNESTALYPSIYLNTQQSVVVATLYVRNRVREAIRVSKIPDAKNPLPVFVYARLVFTDQVLKFLSREELVSTLGETVALGASGIVIWGSLSITRSMKSCLLLDTYMETILNPYIINVTLAAKMCSQVLCQEQGVCIRKDWNSSDYLHLNPDNFDIRLEKGGKFTVHGKPTVEDLEEFSEKFYCSCYTNLSCKEKADVKDTDAVDVCIADGVCIDASLKPPVETEGSPPIFYNTSSSTVSTTMFIVNILFLIISSVASL.

The first 35 residues, 1–35, serve as a signal peptide directing secretion; that stretch reads MGVLKFKHIFFRSFVKSSGVSQIVFTFLLIPCCLT. Cystine bridges form between C60/C351 and C224/C238. The N-linked (GlcNAc...) asparagine glycan is linked to N82. Catalysis depends on E148, which acts as the Proton donor. 4 N-linked (GlcNAc...) asparagine glycosylation sites follow: N166, N235, N254, and N368. 3 disulfide bridges follow: C376–C387, C381–C435, and C437–C464. N393, N440, and N484 each carry an N-linked (GlcNAc...) asparagine glycan. S491 carries the GPI-anchor amidated serine lipid modification. A propeptide spans 492–510 (removed in mature form); sequence TTMFIVNILFLIISSVASL.

Belongs to the glycosyl hydrolase 56 family. Testis.

It is found in the cell membrane. It carries out the reaction Random hydrolysis of (1-&gt;4)-linkages between N-acetyl-beta-D-glucosamine and D-glucuronate residues in hyaluronate.. Its function is as follows. Involved in sperm-egg adhesion. Upon fertilization sperm must first penetrate a layer of cumulus cells that surrounds the egg before reaching the zona pellucida. The cumulus cells are embedded in a matrix containing hyaluronic acid which is formed prior to ovulation. This protein aids in penetrating the layer of cumulus cells by digesting hyaluronic acid. The polypeptide is Hyaluronidase PH-20 (SPAM1) (Macaca fascicularis (Crab-eating macaque)).